Reading from the N-terminus, the 236-residue chain is Ribosomal RNA large subunit methyltransferase E (236 aa).

G76, W78, D99, D115, and D140 together coordinate S-adenosyl-L-methionine. Residue K180 is the Proton acceptor of the active site.

Belongs to the class I-like SAM-binding methyltransferase superfamily. RNA methyltransferase RlmE family.

The protein resides in the cytoplasm. It catalyses the reaction uridine(2552) in 23S rRNA + S-adenosyl-L-methionine = 2'-O-methyluridine(2552) in 23S rRNA + S-adenosyl-L-homocysteine + H(+). Functionally, specifically methylates the uridine in position 2552 of 23S rRNA at the 2'-O position of the ribose in the fully assembled 50S ribosomal subunit. This Rhodopseudomonas palustris (strain HaA2) protein is Ribosomal RNA large subunit methyltransferase E.